The chain runs to 41 residues: Large ribosomal subunit protein bL36 (41 aa).

This sequence belongs to the bacterial ribosomal protein bL36 family.

This Opitutus terrae (strain DSM 11246 / JCM 15787 / PB90-1) protein is Large ribosomal subunit protein bL36.